Here is a 329-residue protein sequence, read N- to C-terminus: Bile salt hydrolase/transferase (329 aa).

Cys-2 serves as the catalytic Nucleophile; acyl-thioester intermediate. Deoxycholate contacts are provided by Cys-2 and Arg-18. Position 82 (Asn-82) interacts with taurine.

Belongs to the peptidase C59 family. As to quaternary structure, homotetramer. The tetramer consists of a dimer of dimers.

The enzyme catalyses glycocholate + H2O = cholate + glycine. It catalyses the reaction cholate + taurine = taurocholate + H2O. The catalysed reaction is taurodeoxycholate + H2O = deoxycholate + taurine. It carries out the reaction glycodeoxycholate + H2O = deoxycholate + glycine. The enzyme catalyses chenodeoxycholate + glycine = glycochenodeoxycholate + H2O. It catalyses the reaction taurochenodeoxycholate + H2O = chenodeoxycholate + taurine. The catalysed reaction is an L-alpha-amino acid + cholate = an N-choloyl-L-alpha-amino acid + H2O. It carries out the reaction an L-alpha-amino acid + taurocholate = an N-choloyl-L-alpha-amino acid + taurine. The enzyme catalyses glycocholate + an L-alpha-amino acid = an N-choloyl-L-alpha-amino acid + glycine. It catalyses the reaction cholate + L-histidine = L-histidocholate + H2O. The catalysed reaction is taurocholate + L-histidine = L-histidocholate + taurine. It carries out the reaction glycocholate + L-histidine = L-histidocholate + glycine. The enzyme catalyses cholate + L-arginine = L-arginocholate + H2O. It catalyses the reaction taurocholate + L-arginine = L-arginocholate + taurine. The catalysed reaction is glycocholate + L-arginine = L-arginocholate + glycine. It carries out the reaction cholate + L-phenylalanine = L-phenylalanocholate + H2O. The enzyme catalyses taurocholate + L-phenylalanine = L-phenylalanocholate + taurine. It participates in lipid metabolism; bile acid biosynthesis. In terms of biological role, possesses dual functions in bile acid metabolism. Acts as a bile salt hydrolase that catalyzes the deconjugation of glycine- and taurine-linked bile salts, which occurs naturally in the intestines of humans, releasing amino acid residues and deconjugated bile salts (bile acids). Can hydrolyze the amide bond in major human conjugated bile salts, such as glycocholate (GCA), taurocholate (TCA) and taurodeoxycholate (TDCA). Shows a slight preference for taurine-conjugated bile acids as substrates. Also acts as an amine N-acyltransferase that conjugates a wide variety of amino acids to conjugated and non-conjugated bile acids, thus producing bacterial bile acid amidates (BBAAs) - also named microbially conjugated bile acids (MCBAs) - in the gastrointestinal tract. These BBAAs may facilitate communication between the microbiota and host through the activation of human ligand-activated transcription factors. The chain is Bile salt hydrolase/transferase (cbh) from Clostridium perfringens (strain 13 / Type A).